A 949-amino-acid polypeptide reads, in one-letter code: Bifunctional uridylyltransferase/uridylyl-removing enzyme (949 aa).

Residues 1–37 form a disordered region; that stretch reads MKETSFWGETPSLSFADDTDKPLSDRTASPPCDPASS. The uridylyltransferase stretch occupies residues 1–395; sequence MKETSFWGET…TTGEPPKVVP (395 aa). The tract at residues 396 to 756 is uridylyl-removing; it reads GPEEFQTIAG…AYPIPERGVT (361 aa). One can recognise an HD domain in the interval 516 to 632; it reads VDEHIVEAVR…LDLADTIQSP (117 aa). ACT domains follow at residues 757–834 and 870–949; these read ELTV…LDIR and VIEV…TPAS.

Belongs to the GlnD family. Mg(2+) is required as a cofactor.

The enzyme catalyses [protein-PII]-L-tyrosine + UTP = [protein-PII]-uridylyl-L-tyrosine + diphosphate. It carries out the reaction [protein-PII]-uridylyl-L-tyrosine + H2O = [protein-PII]-L-tyrosine + UMP + H(+). Its activity is regulated as follows. Uridylyltransferase (UTase) activity is inhibited by glutamine, while glutamine activates uridylyl-removing (UR) activity. Functionally, modifies, by uridylylation and deuridylylation, the PII regulatory proteins (GlnB and homologs), in response to the nitrogen status of the cell that GlnD senses through the glutamine level. Under low glutamine levels, catalyzes the conversion of the PII proteins and UTP to PII-UMP and PPi, while under higher glutamine levels, GlnD hydrolyzes PII-UMP to PII and UMP (deuridylylation). Thus, controls uridylylation state and activity of the PII proteins, and plays an important role in the regulation of nitrogen assimilation and metabolism. This is Bifunctional uridylyltransferase/uridylyl-removing enzyme from Gluconobacter oxydans (strain 621H) (Gluconobacter suboxydans).